We begin with the raw amino-acid sequence, 817 residues long: Leucine--tRNA ligase (817 aa).

The 'HIGH' region signature appears at proline 42–histidine 52. The 'KMSKS' region motif lies at lysine 576–serine 580. Residue lysine 579 participates in ATP binding.

Belongs to the class-I aminoacyl-tRNA synthetase family.

The protein resides in the cytoplasm. The enzyme catalyses tRNA(Leu) + L-leucine + ATP = L-leucyl-tRNA(Leu) + AMP + diphosphate. This is Leucine--tRNA ligase from Halorhodospira halophila (strain DSM 244 / SL1) (Ectothiorhodospira halophila (strain DSM 244 / SL1)).